A 306-amino-acid polypeptide reads, in one-letter code: NAD kinase 1 (306 aa).

Residue D67 is the Proton acceptor of the active site. Residues 67–68 (DG), 149–150 (ND), and D181 contribute to the NAD(+) site.

This sequence belongs to the NAD kinase family. The cofactor is a divalent metal cation.

It localises to the cytoplasm. The enzyme catalyses NAD(+) + ATP = ADP + NADP(+) + H(+). Involved in the regulation of the intracellular balance of NAD and NADP, and is a key enzyme in the biosynthesis of NADP. Catalyzes specifically the phosphorylation on 2'-hydroxyl of the adenosine moiety of NAD to yield NADP. In Synechococcus sp. (strain ATCC 27144 / PCC 6301 / SAUG 1402/1) (Anacystis nidulans), this protein is NAD kinase 1.